We begin with the raw amino-acid sequence, 743 residues long: Phosphoribosylformylglycinamidine synthase subunit PurL (743 aa).

His50 is a catalytic residue. Tyr53 and Lys92 together coordinate ATP. Glu94 serves as a coordination point for Mg(2+). Substrate contacts are provided by residues 95 to 98 (SHNH) and Arg117. Residue His96 is the Proton acceptor of the active site. Asp118 contacts Mg(2+). Gln241 is a binding site for substrate. Asp269 contributes to the Mg(2+) binding site. A substrate-binding site is contributed by 313–315 (ESQ). ATP is bound by residues Asp495 and Gly532. Asn533 contacts Mg(2+). Residue Ser535 coordinates substrate.

Belongs to the FGAMS family. In terms of assembly, monomer. Part of the FGAM synthase complex composed of 1 PurL, 1 PurQ and 2 PurS subunits.

Its subcellular location is the cytoplasm. The catalysed reaction is N(2)-formyl-N(1)-(5-phospho-beta-D-ribosyl)glycinamide + L-glutamine + ATP + H2O = 2-formamido-N(1)-(5-O-phospho-beta-D-ribosyl)acetamidine + L-glutamate + ADP + phosphate + H(+). It functions in the pathway purine metabolism; IMP biosynthesis via de novo pathway; 5-amino-1-(5-phospho-D-ribosyl)imidazole from N(2)-formyl-N(1)-(5-phospho-D-ribosyl)glycinamide: step 1/2. Functionally, part of the phosphoribosylformylglycinamidine synthase complex involved in the purines biosynthetic pathway. Catalyzes the ATP-dependent conversion of formylglycinamide ribonucleotide (FGAR) and glutamine to yield formylglycinamidine ribonucleotide (FGAM) and glutamate. The FGAM synthase complex is composed of three subunits. PurQ produces an ammonia molecule by converting glutamine to glutamate. PurL transfers the ammonia molecule to FGAR to form FGAM in an ATP-dependent manner. PurS interacts with PurQ and PurL and is thought to assist in the transfer of the ammonia molecule from PurQ to PurL. This chain is Phosphoribosylformylglycinamidine synthase subunit PurL, found in Rhizobium etli (strain CIAT 652).